The following is a 254-amino-acid chain: Pimeloyl-[acyl-carrier protein] methyl ester esterase (254 aa).

The AB hydrolase-1 domain occupies 16-242 (LVLIHGWGMN…ASHAPFISHP (227 aa)). Substrate-binding positions include W22, 82–83 (SL), and 143–147 (FLALQ). The active-site Nucleophile is the S82. Catalysis depends on residues D207 and H235. Residue H235 coordinates substrate.

It belongs to the AB hydrolase superfamily. Carboxylesterase BioH family. As to quaternary structure, monomer.

Its subcellular location is the cytoplasm. The catalysed reaction is 6-carboxyhexanoyl-[ACP] methyl ester + H2O = 6-carboxyhexanoyl-[ACP] + methanol + H(+). It functions in the pathway cofactor biosynthesis; biotin biosynthesis. In terms of biological role, the physiological role of BioH is to remove the methyl group introduced by BioC when the pimeloyl moiety is complete. It allows to synthesize pimeloyl-ACP via the fatty acid synthetic pathway through the hydrolysis of the ester bonds of pimeloyl-ACP esters. This is Pimeloyl-[acyl-carrier protein] methyl ester esterase from Photobacterium profundum (strain SS9).